Consider the following 304-residue polypeptide: uncharacterized protein (304 aa).

The first 15 residues, 1–15 (MTRPRPPLGPAMAGA), serve as a signal peptide directing secretion. A Thioredoxin domain is found at 28-151 (NAAASTDADR…LSRWVDSLLS (124 aa)).

This is an uncharacterized protein from Mycobacterium bovis (strain ATCC BAA-935 / AF2122/97).